The sequence spans 790 residues: AMP deaminase (790 aa).

Over residues 1–14 the composition is skewed to polar residues; that stretch reads MSTPLRGSSPQVSF. The interval 1 to 26 is disordered; sequence MSTPLRGSSPQVSFYESELDQEGGSD. The Zn(2+) site is built by H221 and H223. Residues H223 and 292 to 297 contribute to the substrate site; that span reads KFNLKY. A Zn(2+)-binding site is contributed by H488. E491 is a binding site for substrate. Residue H510 is the Proton acceptor of the active site. Zn(2+) is bound at residue D565. 566–569 serves as a coordination point for substrate; it reads DPLQ. 2 disordered regions span residues 698–726 and 739–790; these read NKLR…SSPG and PPPL…KSDK. Low complexity-rich tracts occupy residues 706 to 726 and 750 to 781; these read GSTP…SSPG and NNNN…TTTN.

It belongs to the metallo-dependent hydrolases superfamily. Adenosine and AMP deaminases family. In terms of assembly, homodimer. The cofactor is Zn(2+).

It is found in the cytoplasm. The catalysed reaction is AMP + H2O + H(+) = IMP + NH4(+). The protein operates within purine metabolism; IMP biosynthesis via salvage pathway; IMP from AMP: step 1/1. With respect to regulation, activated by ATP, inhibited by GTP, EDTA and inorganic phosphate. In terms of biological role, catalyzes the conversion of adenosine monophosphate (AMP) to inosine monophosphate (IMP) and ammonia (NH4(+)). Participates in the regulation of the adenylated nucleotide pool and the interconversion to guanylated nucleotides during early morphodifferentiation. The protein is AMP deaminase (amdA) of Dictyostelium discoideum (Social amoeba).